Reading from the N-terminus, the 313-residue chain is Porphobilinogen deaminase (313 aa).

Residue cysteine 241 is modified to S-(dipyrrolylmethanemethyl)cysteine.

This sequence belongs to the HMBS family. Monomer. Dipyrromethane serves as cofactor.

It carries out the reaction 4 porphobilinogen + H2O = hydroxymethylbilane + 4 NH4(+). The protein operates within porphyrin-containing compound metabolism; protoporphyrin-IX biosynthesis; coproporphyrinogen-III from 5-aminolevulinate: step 2/4. It functions in the pathway porphyrin-containing compound metabolism; chlorophyll biosynthesis. Tetrapolymerization of the monopyrrole PBG into the hydroxymethylbilane pre-uroporphyrinogen in several discrete steps. The polypeptide is Porphobilinogen deaminase (Chlorobium phaeobacteroides (strain DSM 266 / SMG 266 / 2430)).